The following is a 2235-amino-acid chain: Bridge-like lipid transfer protein family member 2 (2235 aa).

Positions Met-1–Thr-31 are cleaved as a signal peptide. The segment at Leu-29–Pro-108 is transmembrane domain. Ser-563 is modified (phosphoserine). A glycan (N-linked (GlcNAc...) asparagine) is linked at Asn-730. The tract at residues Pro-1495 to Ser-1529 is disordered. Residues Ser-1813–Asp-1885 are a coiled coil. 3 positions are modified to phosphoserine: Ser-1846, Ser-2090, and Ser-2094. Positions Gly-2074–Val-2099 are disordered.

This sequence belongs to the SABRE family. Expressed in pancreas, placenta and up-regulated in breast carcinoma epithelial cells, ductal in situ carcinoma (DCIS), invasive breast carcinoma (IBC) and metastatic breast carcinoma cells (MET).

The protein resides in the cell membrane. It is found in the endoplasmic reticulum membrane. Its subcellular location is the mitochondrion membrane. In terms of biological role, tube-forming lipid transport protein which binds to phosphatidylinositols and affects phosphatidylinositol-4,5-bisphosphate (PtdIns-4,5-P2) distribution. This Homo sapiens (Human) protein is Bridge-like lipid transfer protein family member 2.